We begin with the raw amino-acid sequence, 411 residues long: Pyridinium-3,5-bisthiocarboxylic acid mononucleotide nickel insertion protein (411 aa).

The protein belongs to the LarC family.

The enzyme catalyses Ni(II)-pyridinium-3,5-bisthiocarboxylate mononucleotide = pyridinium-3,5-bisthiocarboxylate mononucleotide + Ni(2+). Involved in the biosynthesis of a nickel-pincer cofactor ((SCS)Ni(II) pincer complex). Binds Ni(2+), and functions in nickel delivery to pyridinium-3,5-bisthiocarboxylic acid mononucleotide (P2TMN), to form the mature cofactor. Is thus probably required for the activation of nickel-pincer cofactor-dependent enzymes. The chain is Pyridinium-3,5-bisthiocarboxylic acid mononucleotide nickel insertion protein from Geobacillus kaustophilus (strain HTA426).